The primary structure comprises 424 residues: Glutamyl-tRNA reductase (424 aa).

Substrate contacts are provided by residues 49–52 (TCNR), Ser-107, 112–114 (EPQ), and Gln-118. Cys-50 serves as the catalytic Nucleophile. An NADP(+)-binding site is contributed by 187 to 192 (GAGETI).

This sequence belongs to the glutamyl-tRNA reductase family. In terms of assembly, homodimer.

The enzyme catalyses (S)-4-amino-5-oxopentanoate + tRNA(Glu) + NADP(+) = L-glutamyl-tRNA(Glu) + NADPH + H(+). Its pathway is porphyrin-containing compound metabolism; protoporphyrin-IX biosynthesis; 5-aminolevulinate from L-glutamyl-tRNA(Glu): step 1/2. Functionally, catalyzes the NADPH-dependent reduction of glutamyl-tRNA(Glu) to glutamate 1-semialdehyde (GSA). The protein is Glutamyl-tRNA reductase of Pseudomonas fluorescens (strain ATCC BAA-477 / NRRL B-23932 / Pf-5).